Here is a 576-residue protein sequence, read N- to C-terminus: uncharacterized protein (576 aa).

Positions 241-261 (DNTKAPSPTNTAGSRELSTPA) are enriched in polar residues. The tract at residues 241 to 270 (DNTKAPSPTNTAGSRELSTPAGSPGKASLP) is disordered.

This is an uncharacterized protein from Bacillus subtilis (strain 168).